Here is a 193-residue protein sequence, read N- to C-terminus: MTQMSDEQFRIFIETIKSLGPIKEEPPSKGSFSNCTVRFSGQRDHDAVDEFINAVETYKEVEGISDKDALKGLPLLFKSIAVVWWKGVRRDAKTWSDALQLLRDHFSPTKPSYQIYMEIFETKQSYDEVIDSFICKQRALLAKLPEGRHDEETELDFIYGLMQPKYRESIPRHEVKTFRELLDRGRTVERTRH.

It belongs to the ARC/ARG3.1 family. Homooligomer; homooligomerizes into virion-like capsids.

It localises to the extracellular vesicle membrane. Functionally, self-assembles into virion-like capsids that encapsulate RNAs and mediate intercellular RNA transfer. Arc2 protein is released from cells in extracellular vesicles that mediate the transfer of mRNA into neighboring cells. In Drosophila melanogaster (Fruit fly), this protein is Activity-regulated cytoskeleton associated protein 2.